The sequence spans 469 residues: Melanopsin (469 aa).

Residues 1-71 lie on the Extracellular side of the membrane; that stretch reads MDSPPGPTAP…VDVPDHAHYI (71 aa). Residue Asn-30 is glycosylated (N-linked (GlcNAc...) asparagine). A helical transmembrane segment spans residues 72 to 92; the sequence is LGTVILLVGLTGMLGNLTVIY. Over 93–106 the chain is Cytoplasmic; sequence TFCRSRSLRTPANM. The chain crosses the membrane as a helical span at residues 107 to 127; the sequence is LIINLAVSDFLMSFTQAPVFF. Residues 128 to 143 are Extracellular-facing; it reads ASSLYKKWLFGETGCE. Residues Cys-142 and Cys-220 are joined by a disulfide bond. Residues 144–164 traverse the membrane as a helical segment; sequence FYAFCGAVLGITSMITLTAIA. The Cytoplasmic segment spans residues 165-187; the sequence is LDRYLVITRPLATIGMGSKRRTA. Residues 188–208 traverse the membrane as a helical segment; sequence LVLLGIWLYALAWSLPPFFGW. At 209–237 the chain is on the extracellular side; the sequence is SAYVPEGLLTSCSWDYVTFTPQVRAYTML. A helical transmembrane segment spans residues 238-258; it reads LFCFVFFLPLLVIIFCYISIF. The Cytoplasmic segment spans residues 259–295; sequence RAIRETGRACEGWSESPQRRRQWHRLQSEWKMAKVAL. Residues 296-316 traverse the membrane as a helical segment; sequence IVILLFVLSWAPYSTVALVAF. Over 317–328 the chain is Extracellular; it reads AGYSHILTPYMS. Residues 329–349 form a helical membrane-spanning segment; that stretch reads SVPAVIAKASAIHNPIVYAIT. An N6-(retinylidene)lysine modification is found at Lys-336. The Cytoplasmic portion of the chain corresponds to 350-469; that stretch reads HPKYRAAIAQ…SLDLGMQDAP (120 aa). The disordered stretch occupies residues 409 to 469; sequence GSESEVGWTD…SLDLGMQDAP (61 aa).

It belongs to the G-protein coupled receptor 1 family. Opsin subfamily.

Its subcellular location is the cell membrane. It is found in the cell projection. The protein localises to the axon. The protein resides in the dendrite. It localises to the perikaryon. In terms of biological role, photoreceptor that binds cis-retinaldehydes. Contributes to pupillar reflex, photoentrainment and other non-image forming responses to light. May be involved in the optokinetic visual tracking response. May be involved in the regulation of retinal hyaloid vessel growth and regression. This is Melanopsin (OPN4) from Phodopus sungorus (Striped hairy-footed hamster).